The primary structure comprises 1168 residues: Transcription-repair-coupling factor (1168 aa).

Residues 633-794 (DMQKSRPMDR…MLGVRDLSVI (162 aa)) enclose the Helicase ATP-binding domain. 646–653 (GDVGYGKT) is an ATP binding site. The short motif at 747-750 (DEEQ) is the DEEQ box element. The 162-residue stretch at 808–969 (VLEQNMSFIK…GFKIAMRDLN (162 aa)) folds into the Helicase C-terminal domain.

In the N-terminal section; belongs to the UvrB family. This sequence in the C-terminal section; belongs to the helicase family. RecG subfamily.

It localises to the cytoplasm. In terms of biological role, couples transcription and DNA repair by recognizing RNA polymerase (RNAP) stalled at DNA lesions. Mediates ATP-dependent release of RNAP and its truncated transcript from the DNA, and recruitment of nucleotide excision repair machinery to the damaged site. This Staphylococcus aureus (strain MSSA476) protein is Transcription-repair-coupling factor.